The primary structure comprises 210 residues: Ribosomal RNA large subunit methyltransferase E (210 aa).

S-adenosyl-L-methionine is bound by residues glycine 67, tryptophan 69, aspartate 87, aspartate 103, and aspartate 128. Lysine 168 functions as the Proton acceptor in the catalytic mechanism.

Belongs to the class I-like SAM-binding methyltransferase superfamily. RNA methyltransferase RlmE family.

Its subcellular location is the cytoplasm. The enzyme catalyses uridine(2552) in 23S rRNA + S-adenosyl-L-methionine = 2'-O-methyluridine(2552) in 23S rRNA + S-adenosyl-L-homocysteine + H(+). In terms of biological role, specifically methylates the uridine in position 2552 of 23S rRNA at the 2'-O position of the ribose in the fully assembled 50S ribosomal subunit. The chain is Ribosomal RNA large subunit methyltransferase E from Psychrobacter arcticus (strain DSM 17307 / VKM B-2377 / 273-4).